The chain runs to 560 residues: Membrane protein insertase YidC (560 aa).

6 consecutive transmembrane segments (helical) span residues 5–25 (IINLIAAVVLSLSIIFGWQYF), 334–354 (AIDFGWFYIITKPVFYAMNFF), 357–377 (YVGNFGISILIVTVIIKLLMF), 431–451 (LPILVQIPVFFSIYKVLYVTI), 476–496 (LFGLLPFAPPSFLMIGAWPIL), and 522–542 (FMPLIFLFMFSSFPVGLLIYW).

It belongs to the OXA1/ALB3/YidC family. Type 1 subfamily. As to quaternary structure, interacts with the Sec translocase complex via SecD. Specifically interacts with transmembrane segments of nascent integral membrane proteins during membrane integration.

It localises to the cell inner membrane. Its function is as follows. Required for the insertion and/or proper folding and/or complex formation of integral membrane proteins into the membrane. Involved in integration of membrane proteins that insert both dependently and independently of the Sec translocase complex, as well as at least some lipoproteins. Aids folding of multispanning membrane proteins. This chain is Membrane protein insertase YidC, found in Rickettsia prowazekii (strain Madrid E).